Here is a 336-residue protein sequence, read N- to C-terminus: Glycerol-3-phosphate dehydrogenase [NAD(P)+] (336 aa).

The NADPH site is built by Ser14, Trp15, Arg35, Arg36, and Lys109. Residues Lys109 and Gly139 each coordinate sn-glycerol 3-phosphate. Ala143 is a binding site for NADPH. Sn-glycerol 3-phosphate-binding residues include Lys194, Asp247, Ser257, Arg258, and Asn259. The Proton acceptor role is filled by Lys194. NADPH is bound at residue Arg258. Glu284 contributes to the NADPH binding site.

The protein belongs to the NAD-dependent glycerol-3-phosphate dehydrogenase family.

It is found in the cytoplasm. The enzyme catalyses sn-glycerol 3-phosphate + NAD(+) = dihydroxyacetone phosphate + NADH + H(+). It catalyses the reaction sn-glycerol 3-phosphate + NADP(+) = dihydroxyacetone phosphate + NADPH + H(+). It functions in the pathway membrane lipid metabolism; glycerophospholipid metabolism. In terms of biological role, catalyzes the reduction of the glycolytic intermediate dihydroxyacetone phosphate (DHAP) to sn-glycerol 3-phosphate (G3P), the key precursor for phospholipid synthesis. In Streptomyces avermitilis (strain ATCC 31267 / DSM 46492 / JCM 5070 / NBRC 14893 / NCIMB 12804 / NRRL 8165 / MA-4680), this protein is Glycerol-3-phosphate dehydrogenase [NAD(P)+].